Reading from the N-terminus, the 140-residue chain is L-fucose mutarotase (140 aa).

The active-site Proton donor is the histidine 22. Residues aspartate 30, arginine 107, and 129-131 contribute to the substrate site; that span reads YGN.

The protein belongs to the RbsD / FucU family. FucU mutarotase subfamily. Homodecamer.

It localises to the cytoplasm. It catalyses the reaction alpha-L-fucose = beta-L-fucose. It functions in the pathway carbohydrate metabolism; L-fucose metabolism. Functionally, involved in the anomeric conversion of L-fucose. This is L-fucose mutarotase from Salmonella arizonae (strain ATCC BAA-731 / CDC346-86 / RSK2980).